We begin with the raw amino-acid sequence, 387 residues long: Norsolorinic acid reductase stcV (387 aa).

Residue aspartate 69 coordinates NADP(+). Tyrosine 74 serves as the catalytic Proton donor. Histidine 148 lines the substrate pocket. NADP(+)-binding positions include 178–179 (SD), glutamine 204, 233–243 (GALGRGQYKSA), and 301–309 (RTVEQLEAN).

This sequence belongs to the aldo/keto reductase family. Aldo/keto reductase 2 subfamily.

The protein operates within mycotoxin biosynthesis; sterigmatocystin biosynthesis. Its function is as follows. Norsolorinic acid reductase; part of the gene cluster that mediates the biosynthesis of sterigmatocystin (ST), a polyketide-derived furanocoumarin which is part of the most toxic and carcinogenic compounds among the known mycotoxins. The first step in the biosynthesis of sterigmatocystin is the production of hexanoate by the fatty acid synthase (FAS) units stcJ and stcK. The polyketide backbone is assembled by the non-reducing polyketide synthase stcA by condensation of the starter hexanoyl-CoA and 7 malonyl-CoA extender units followed by cyclization and release of norsolorinic acid. Norsolorinic acid is the first stable intermediate in the biosynthesis of sterigmatocystin and is converted into averantin (AVN) by the ketoreductase stcE which reduces the hexanoate ketone to an alcohol. Averantin is then oxidized into 5'-hydroxyaverantin (HAVN) by the cytochrome P450 monooxygenase stcF. 5'-hydroxyaverantin is further converted to 5'-oxyaverantin (OAVN) by the 5'-hydroxyaverantin dehydrogenase stcG. The next step is the conversion of OAVN into averufin (AVF) which is catalyzed by a yet to be identified enzyme. The cytochrome P450 monooxygenase stcB and the flavin-binding monooxygenase stcW are both required for the conversion of averufin to 1-hydroxyversicolorone. The esterase stcI probably catalyzes the formation of versiconal hemiacetal acetate from 1-hydroxyversicolorone. The oxydoreductase stcN then probably catalyzes the biosynthetic step from versiconal to versicolorin B (VERB). The next step is performed by the versicolorin B desaturase stcL to produce versicolorin A (VERA). The ketoreductase stcU and the cytochrome P450 monooxygenase stcS are involved in the conversion of versicolorin A to demethylsterigmatocystin. The Baeyer-Villiger oxidas stcQ and the reductase stcR might be involved in the biosynthetic step from versicolorin A to demethylsterigmatocystin. The final step in the biosynthesis of sterigmatocystin is the methylation of demethylsterigmatocystin catalyzed by the methyltransferase stcP. The protein is Norsolorinic acid reductase stcV of Emericella nidulans (strain FGSC A4 / ATCC 38163 / CBS 112.46 / NRRL 194 / M139) (Aspergillus nidulans).